An 806-amino-acid chain; its full sequence is Breast cancer anti-estrogen resistance protein 3 homolog (806 aa).

The region spanning 152 to 251 is the SH2 domain; sequence WYHGRIPRQV…QSGAIIFQPI (100 aa). Disordered regions lie at residues 308–343 and 390–412; these read RNKE…PLGS and RGSD…SIKQ. Residues 538–805 form the Ras-GEF domain; it reads DPRTIAKHIL…TALSRKLEPP (268 aa).

In terms of biological role, may act as an adapter protein. This chain is Breast cancer anti-estrogen resistance protein 3 homolog (bcar3), found in Xenopus laevis (African clawed frog).